Consider the following 241-residue polypeptide: MRSGVIAQKVGMTRVFTETGEHIPVTVLKLGNCQVLAHRTTEKNGYVALQLGSGARKTVYMPKAERGQFAVAKVEPKRKVAEFRVSEDALIPVGAEIQADHFVVGQFVDVTGTSVGKGFAGGMKRWNFGGLRATHGVSVSHRSIGSTGGRQDPGKTFKNKKMPGHMGVDRITTLNLRVVQLDVERGLILVEGAVPGSKGGWISVRDAVKKALPADAPKPGKFRLANGGEEAAAPAAEQEGV.

Disordered regions lie at residues 139–164 and 215–241; these read VSHR…KMPG and DAPK…QEGV. Q151 bears the N5-methylglutamine mark. Low complexity predominate over residues 225-241; it reads ANGGEEAAAPAAEQEGV.

The protein belongs to the universal ribosomal protein uL3 family. Part of the 50S ribosomal subunit. Forms a cluster with proteins L14 and L19. Methylated by PrmB.

Its function is as follows. One of the primary rRNA binding proteins, it binds directly near the 3'-end of the 23S rRNA, where it nucleates assembly of the 50S subunit. The sequence is that of Large ribosomal subunit protein uL3 from Rhodopseudomonas palustris (strain HaA2).